A 406-amino-acid polypeptide reads, in one-letter code: Acetate kinase (406 aa).

Residue Asn10 coordinates Mg(2+). Lys17 is an ATP binding site. Substrate is bound at residue Arg92. The active-site Proton donor/acceptor is the Asp151. ATP contacts are provided by residues 211-215 (HLGSG), 286-288 (DFR), and 335-339 (GIGEN). Glu389 provides a ligand contact to Mg(2+).

Belongs to the acetokinase family. In terms of assembly, homodimer. It depends on Mg(2+) as a cofactor. Mn(2+) serves as cofactor.

It localises to the cytoplasm. It catalyses the reaction acetate + ATP = acetyl phosphate + ADP. It participates in metabolic intermediate biosynthesis; acetyl-CoA biosynthesis; acetyl-CoA from acetate: step 1/2. Functionally, catalyzes the formation of acetyl phosphate from acetate and ATP. Can also catalyze the reverse reaction. The polypeptide is Acetate kinase (Buchnera aphidicola subsp. Cinara cedri (strain Cc)).